Consider the following 632-residue polypeptide: 1-deoxy-D-xylulose-5-phosphate synthase (632 aa).

Thiamine diphosphate is bound by residues H79 and 120–122 (GHA). D152 is a Mg(2+) binding site. Residues 153 to 154 (GA), N181, F293, and E377 each bind thiamine diphosphate. A Mg(2+)-binding site is contributed by N181.

This sequence belongs to the transketolase family. DXPS subfamily. As to quaternary structure, homodimer. Requires Mg(2+) as cofactor. Thiamine diphosphate serves as cofactor.

It carries out the reaction D-glyceraldehyde 3-phosphate + pyruvate + H(+) = 1-deoxy-D-xylulose 5-phosphate + CO2. The protein operates within metabolic intermediate biosynthesis; 1-deoxy-D-xylulose 5-phosphate biosynthesis; 1-deoxy-D-xylulose 5-phosphate from D-glyceraldehyde 3-phosphate and pyruvate: step 1/1. Catalyzes the acyloin condensation reaction between C atoms 2 and 3 of pyruvate and glyceraldehyde 3-phosphate to yield 1-deoxy-D-xylulose-5-phosphate (DXP). This chain is 1-deoxy-D-xylulose-5-phosphate synthase, found in Parabacteroides distasonis (strain ATCC 8503 / DSM 20701 / CIP 104284 / JCM 5825 / NCTC 11152).